A 508-amino-acid chain; its full sequence is Steroid 17-alpha-hydroxylase/17,20 lyase (508 aa).

Residue asparagine 202 participates in substrate binding. A heme-binding site is contributed by cysteine 442.

Belongs to the cytochrome P450 family. Heme is required as a cofactor.

Its subcellular location is the endoplasmic reticulum membrane. It localises to the microsome membrane. The enzyme catalyses a C21-steroid + reduced [NADPH--hemoprotein reductase] + O2 = a 17alpha-hydroxy-C21-steroid + oxidized [NADPH--hemoprotein reductase] + H2O + H(+). The catalysed reaction is progesterone + reduced [NADPH--hemoprotein reductase] + O2 = 17alpha-hydroxyprogesterone + oxidized [NADPH--hemoprotein reductase] + H2O + H(+). It catalyses the reaction pregnenolone + reduced [NADPH--hemoprotein reductase] + O2 = 17alpha-hydroxypregnenolone + oxidized [NADPH--hemoprotein reductase] + H2O + H(+). It carries out the reaction 17alpha-hydroxyprogesterone + reduced [NADPH--hemoprotein reductase] + O2 = androst-4-ene-3,17-dione + acetate + oxidized [NADPH--hemoprotein reductase] + H2O + 2 H(+). The enzyme catalyses 17alpha-hydroxyprogesterone + reduced [NADPH--hemoprotein reductase] + O2 = 16alpha,17alpha-dihydroxyprogesterone + oxidized [NADPH--hemoprotein reductase] + H2O + H(+). The catalysed reaction is 16alpha,17alpha-dihydroxyprogesterone + reduced [NADPH--hemoprotein reductase] + O2 = 6beta,16alpha,17alpha-trihydroxyprogesterone + oxidized [NADPH--hemoprotein reductase] + H2O + H(+). It catalyses the reaction 17alpha-hydroxypregnenolone + reduced [NADPH--hemoprotein reductase] + O2 = 3beta-hydroxyandrost-5-en-17-one + acetate + oxidized [NADPH--hemoprotein reductase] + H2O + 2 H(+). It carries out the reaction 16alpha,17alpha-dihydroxypregnenolone + reduced [NADPH--hemoprotein reductase] + O2 = 3beta,16alpha-dihydroxy-androst-5-en-17-one + acetate + oxidized [NADPH--hemoprotein reductase] + H2O + 2 H(+). The enzyme catalyses 3beta-hydroxyandrost-5-en-17-one + reduced [NADPH--hemoprotein reductase] + O2 = 3beta,16alpha-dihydroxy-androst-5-en-17-one + oxidized [NADPH--hemoprotein reductase] + H2O + H(+). The catalysed reaction is androst-4-ene-3,17-dione + reduced [NADPH--hemoprotein reductase] + O2 = 16alpha-hydroxyandrost-4-ene-3,17-dione + oxidized [NADPH--hemoprotein reductase] + H2O + H(+). The protein operates within steroid hormone biosynthesis. It functions in the pathway steroid biosynthesis; glucocorticoid biosynthesis. With respect to regulation, regulated predominantly by intracellular cAMP levels. The 17,20-lyase activity is stimulated by cytochrome b5, which acts as an allosteric effector increasing the Vmax of the lyase activity. Functionally, a cytochrome P450 monooxygenase involved in corticoid and androgen biosynthesis. Catalyzes 17-alpha hydroxylation of C21 steroids, which is common for both pathways. A second oxidative step, required only for androgen synthesis, involves an acyl-carbon cleavage. The 17-alpha hydroxy intermediates, as part of adrenal glucocorticoids biosynthesis pathway, are precursors of cortisol. Hydroxylates steroid hormones, pregnenolone and progesterone to form 17-alpha hydroxy metabolites, followed by the cleavage of the C17-C20 bond to form C19 steroids, dehydroepiandrosterone (DHEA) and androstenedione. Has 16-alpha hydroxylase activity. Catalyzes 16-alpha hydroxylation of 17-alpha hydroxy pregnenolone, followed by the cleavage of the C17-C20 bond to form 16-alpha-hydroxy DHEA. Also 16-alpha hydroxylates androgens, relevant for estriol synthesis. Mechanistically, uses molecular oxygen inserting one oxygen atom into a substrate, and reducing the second into a water molecule, with two electrons provided by NADPH via cytochrome P450 reductase (CPR; NADPH-ferrihemoprotein reductase). This chain is Steroid 17-alpha-hydroxylase/17,20 lyase (CYP17A1), found in Macaca fascicularis (Crab-eating macaque).